Reading from the N-terminus, the 1103-residue chain is Detocs histidine-protein kinase DtcA (1103 aa).

Position 758 is a phosphohistidine; by autocatalysis (histidine 758). The TPR repeat unit spans residues 818–851 (TIINDAKEKVHINTGEFIESAKVFNYAIEIEFVE).

Post-translationally, autophosphorylated.

It carries out the reaction ATP + protein L-histidine = ADP + protein N-phospho-L-histidine.. In terms of biological role, sensor-kinase member of the two-component regulatory system Detocs that confers resistance to bacteriophage. When the system (DtcA-DtcB-DtcC) is expressed in a susceptible E.coli (strain MG1655) it confers resistance to bacteriophages T2, T4, T5, T7, SECphi4, SECphi6 and SECphi27; the level of resistance varies, resistance to T2, T7 and SECphi4 is not very high. DtcA (this subunit) probably autophosphorylates upon sensing viral infection, and subsequently transfers the phosphate signal to DtcC which activates it, leading to an antiviral defense; DtcB may scavenge phosphorylation signals from accidental activation of DtcA. The sequence is that of Detocs histidine-protein kinase DtcA from Enterobacter cloacae (strain JD6301).